A 429-amino-acid chain; its full sequence is Probable M18 family aminopeptidase 2 (429 aa).

Zn(2+) contacts are provided by histidine 82, histidine 156, and histidine 401.

The protein belongs to the peptidase M18 family. Zn(2+) is required as a cofactor.

The polypeptide is Probable M18 family aminopeptidase 2 (Pseudomonas putida (strain ATCC 700007 / DSM 6899 / JCM 31910 / BCRC 17059 / LMG 24140 / F1)).